We begin with the raw amino-acid sequence, 174 residues long: UPF0316 protein lmo1776 (174 aa).

3 consecutive transmembrane segments (helical) span residues 4 to 24 (GIFI…IYTV), 36 to 56 (LAAL…SLVL), and 62 to 82 (IANV…GMKI).

The protein belongs to the UPF0316 family.

It is found in the cell membrane. This Listeria monocytogenes serovar 1/2a (strain ATCC BAA-679 / EGD-e) protein is UPF0316 protein lmo1776.